We begin with the raw amino-acid sequence, 239 residues long: Purine nucleoside phosphorylase DeoD-type (239 aa).

His-5 lines the a purine D-ribonucleoside pocket. 2 residues coordinate phosphate: Gly-21 and Arg-25. Lys-27 carries the post-translational modification N6-acetyllysine. Residues Arg-44 and 88–91 each bind phosphate; that span reads RVGS. Residues 180–182 and 204–205 each bind a purine D-ribonucleoside; these read EME and SD. Asp-205 acts as the Proton donor in catalysis.

This sequence belongs to the PNP/UDP phosphorylase family. In terms of assembly, homohexamer; trimer of homodimers.

It catalyses the reaction a purine D-ribonucleoside + phosphate = a purine nucleobase + alpha-D-ribose 1-phosphate. The enzyme catalyses a purine 2'-deoxy-D-ribonucleoside + phosphate = a purine nucleobase + 2-deoxy-alpha-D-ribose 1-phosphate. Functionally, catalyzes the reversible phosphorolytic breakdown of the N-glycosidic bond in the beta-(deoxy)ribonucleoside molecules, with the formation of the corresponding free purine bases and pentose-1-phosphate. In Escherichia coli O81 (strain ED1a), this protein is Purine nucleoside phosphorylase DeoD-type.